We begin with the raw amino-acid sequence, 466 residues long: Polycomb group protein FIE1 (466 aa).

Residues 1 to 10 are compositionally biased toward basic residues; sequence MGPTSRNHKS. The disordered stretch occupies residues 1–71; that stretch reads MGPTSRNHKS…GEGEPQETVL (71 aa). Residues 31-49 are compositionally biased toward low complexity; that stretch reads SITASASASAFASPAVANS. WD repeat units lie at residues 167–209, 212–252, 258–298, 324–361, 374–414, and 421–460; these read DMNE…IYKS, GHGG…LILV, GHRH…EYVE, IHSNYVDCTKWLGDFVLSKSVENEILLWESITKEENPG, PECN…PVLI, and QVKSAIRQTAVSFDGSTILACTEDGNIWRWDEVDHPTAPV.

Belongs to the WD repeat ESC family. As to quaternary structure, interacts with EZ1 and CLF. Component of the polycomb repressive complex 2 (PRC2), which methylates 'Lys-27' residues of histone H3 (H3K27me3), leading to transcriptional repression of the affected target gene. As to expression, expressed specifically in seed endosperm.

Its function is as follows. Polycomb group (PcG) protein. PcG proteins act by forming multiprotein complexes, which are required to maintain the transcriptionally repressive state of homeotic genes throughout development. PcG proteins are not required to initiate repression, but to maintain it during later stages of development. They act via the methylation of histones, rendering chromatin heritably changed in its expressibility. Together with EZ1 and CLF forms a complex that is involved in gene transcriptional repression by trimethylation on histone H3 'Lys-27' (H3K27me3) of target genes. Involved in the regulation of embryo and seed endosperm development. FIE1-containing PcG complex in seed endosperm regulates the expression of various transcription factors by trimethylation on histone H3 'Lys-27' (H3K27me3) of target genes. Involved in the overall expression regulation of nutrient metabolism genes, such as prolamin synthesis and seed storage protein synthesis genes. Can regulate valine, leucine and isoleucine metabolism-related genes. The protein is Polycomb group protein FIE1 of Oryza sativa subsp. japonica (Rice).